Consider the following 63-residue polypeptide: Large ribosomal subunit protein uL29 (63 aa).

This sequence belongs to the universal ribosomal protein uL29 family.

This chain is Large ribosomal subunit protein uL29, found in Actinobacillus succinogenes (strain ATCC 55618 / DSM 22257 / CCUG 43843 / 130Z).